Here is a 71-residue protein sequence, read N- to C-terminus: Large ribosomal subunit protein bL31 (71 aa).

Zn(2+) contacts are provided by C16, C18, C38, and C41.

Belongs to the bacterial ribosomal protein bL31 family. Type A subfamily. In terms of assembly, part of the 50S ribosomal subunit. The cofactor is Zn(2+).

Binds the 23S rRNA. This chain is Large ribosomal subunit protein bL31, found in Chromobacterium violaceum (strain ATCC 12472 / DSM 30191 / JCM 1249 / CCUG 213 / NBRC 12614 / NCIMB 9131 / NCTC 9757 / MK).